The following is a 718-amino-acid chain: F-box/LRR-repeat protein 18 (718 aa).

An F-box domain is found at 25–72 (GVHLLGFSDEILLHILSHVPSTDLILNVRRTCRKLAALCLDKSLIHTV). 12 LRR repeats span residues 77–103 (DYQASEDKVRQLVKEIGREIQQLSMAG), 104–128 (CYWLPGSTVEHVARCRSLVKVNLSG), 129–153 (CHLTSLRLSKMLSALQHLRSLAIDV), 177–201 (KQTLFTPSYGVVPCCTSLEKLLLYF), 324–352 (CTLSGGHLIQQVINGGKDLRSLASLNLSG), 367–392 (EDDIDSSILETLVASCCNLRHLNLSA), 393–422 (AHHHSSEGLGRHLCQLLARLRHLRSLSLPV), 468–492 (CPQPSSVFWSLLKNLPFLEHLELIG), 516–540 (AQSVGDSEVAAIGQLAFLRHLTLAQ), 542–567 (PSVLTGSGLVNIGLQCQQLRSLSLAN), 572–597 (GKVVYMPALSDMLKHCKRLRDLRLEQ), and 599–623 (YFSANAQFFQALSQCPSLQRLCLVS).

As to quaternary structure, directly interacts with SKP1 and CUL1.

Its function is as follows. Substrate-recognition component of the SCF (SKP1-CUL1-F-box protein)-type E3 ubiquitin ligase complex. This Homo sapiens (Human) protein is F-box/LRR-repeat protein 18 (FBXL18).